Here is a 206-residue protein sequence, read N- to C-terminus: Dephospho-CoA kinase (206 aa).

The DPCK domain maps to 4–200; it reads IVALTGGIGS…AHYLQLASQF (197 aa). 12–17 serves as a coordination point for ATP; sequence GSGKST.

This sequence belongs to the CoaE family.

It is found in the cytoplasm. It carries out the reaction 3'-dephospho-CoA + ATP = ADP + CoA + H(+). The protein operates within cofactor biosynthesis; coenzyme A biosynthesis; CoA from (R)-pantothenate: step 5/5. Its function is as follows. Catalyzes the phosphorylation of the 3'-hydroxyl group of dephosphocoenzyme A to form coenzyme A. The polypeptide is Dephospho-CoA kinase (Shigella flexneri).